A 249-amino-acid chain; its full sequence is 5'-nucleotidase SurE (249 aa).

Positions 9, 10, 40, and 92 each coordinate a divalent metal cation.

Belongs to the SurE nucleotidase family. A divalent metal cation serves as cofactor.

The protein localises to the cytoplasm. It carries out the reaction a ribonucleoside 5'-phosphate + H2O = a ribonucleoside + phosphate. In terms of biological role, nucleotidase that shows phosphatase activity on nucleoside 5'-monophosphates. This Shewanella putrefaciens (strain CN-32 / ATCC BAA-453) protein is 5'-nucleotidase SurE.